The sequence spans 184 residues: Isopentenyl-diphosphate Delta-isomerase (184 aa).

Mn(2+)-binding residues include His-25 and His-32. The region spanning 30 to 164 (PLHLAFSCWL…PWAFSPWMVL (135 aa)) is the Nudix hydrolase domain. Residue Cys-67 is part of the active site. His-69 provides a ligand contact to Mn(2+). Glu-87 contacts Mg(2+). Mn(2+) is bound by residues Glu-114 and Glu-116. Glu-116 is an active-site residue.

It belongs to the IPP isomerase type 1 family. In terms of assembly, homodimer. It depends on Mg(2+) as a cofactor. Mn(2+) is required as a cofactor.

The protein localises to the cytoplasm. It carries out the reaction isopentenyl diphosphate = dimethylallyl diphosphate. The protein operates within isoprenoid biosynthesis; dimethylallyl diphosphate biosynthesis; dimethylallyl diphosphate from isopentenyl diphosphate: step 1/1. Catalyzes the 1,3-allylic rearrangement of the homoallylic substrate isopentenyl (IPP) to its highly electrophilic allylic isomer, dimethylallyl diphosphate (DMAPP). The chain is Isopentenyl-diphosphate Delta-isomerase from Klebsiella pneumoniae subsp. pneumoniae (strain ATCC 700721 / MGH 78578).